Consider the following 423-residue polypeptide: O-methyltransferase aoiF (423 aa).

Asp273 provides a ligand contact to S-adenosyl-L-methionine. The active-site Proton acceptor is the His324.

Belongs to the class I-like SAM-binding methyltransferase superfamily. Cation-independent O-methyltransferase family.

The protein operates within secondary metabolite biosynthesis. O-methyltransferase; part of the gene cluster that mediates the biosynthesis of a methylated derivative of known natural products orthosporin and diaporthin. Within the pathway, aoiF catalyzes the biotransformation of orthosporin to diaporthin but also of diaporthin to the final product, by performing a tandem methylation of the polyketide core. Orthosporin is produced by an oxidoreductase that has still to be identified and that catalyzes the stereospecific reduction of the carbonyl moiety of the hexaketide isocoumarin scaffold produced by the non-reducing polyketide synthase aoiG to generate the S-configured secondary alcohol at C-11. The polypeptide is O-methyltransferase aoiF (Aspergillus oryzae (strain ATCC 42149 / RIB 40) (Yellow koji mold)).